Consider the following 174-residue polypeptide: Phospholipase A2-like protein Y52B11A.8 (174 aa).

The first 18 residues, 1–18 (MRGLLVATWIFVSVAASA), serve as a signal peptide directing secretion. 2 N-linked (GlcNAc...) asparagine glycosylation sites follow: Asn-49 and Asn-143. The segment at 137-174 (YEASGPNASTTEESPAEKDDYDYESHVAGLNATPSSST) is disordered.

This sequence belongs to the phospholipase A2 family.

Its subcellular location is the secreted. In Caenorhabditis elegans, this protein is Phospholipase A2-like protein Y52B11A.8.